Here is a 262-residue protein sequence, read N- to C-terminus: Polyamine aminopropyltransferase (262 aa).

Residues 1 to 249 (MWITQEITPY…DIHRAAFALP (249 aa)) enclose the PABS domain. Position 29 (asparagine 29) interacts with S-methyl-5'-thioadenosine. A spermidine-binding site is contributed by aspartate 83. Aspartate 155 (proton acceptor) is an active-site residue.

The protein belongs to the spermidine/spermine synthase family. In terms of assembly, homodimer or homotetramer.

The protein resides in the cytoplasm. It carries out the reaction S-adenosyl 3-(methylsulfanyl)propylamine + putrescine = S-methyl-5'-thioadenosine + spermidine + H(+). Its pathway is amine and polyamine biosynthesis; spermidine biosynthesis; spermidine from putrescine: step 1/1. Its function is as follows. Catalyzes the irreversible transfer of a propylamine group from the amino donor S-adenosylmethioninamine (decarboxy-AdoMet) to putrescine (1,4-diaminobutane) to yield spermidine. In Helicobacter pylori (strain P12), this protein is Polyamine aminopropyltransferase.